The sequence spans 325 residues: Tetraacyldisaccharide 4'-kinase (325 aa).

53–60 (SVGGNGKT) serves as a coordination point for ATP.

This sequence belongs to the LpxK family.

It catalyses the reaction a lipid A disaccharide + ATP = a lipid IVA + ADP + H(+). The protein operates within glycolipid biosynthesis; lipid IV(A) biosynthesis; lipid IV(A) from (3R)-3-hydroxytetradecanoyl-[acyl-carrier-protein] and UDP-N-acetyl-alpha-D-glucosamine: step 6/6. Its function is as follows. Transfers the gamma-phosphate of ATP to the 4'-position of a tetraacyldisaccharide 1-phosphate intermediate (termed DS-1-P) to form tetraacyldisaccharide 1,4'-bis-phosphate (lipid IVA). The protein is Tetraacyldisaccharide 4'-kinase of Pasteurella multocida (strain Pm70).